The sequence spans 197 residues: Holliday junction branch migration complex subunit RuvA (197 aa).

Residues 1–64 are domain I; that stretch reads MIASVRGVVQ…EDMLALFGFS (64 aa). The interval 65–143 is domain II; that stretch reads SPAQRALFEL…VATISPQLST (79 aa). The tract at residues 144–153 is flexible linker; that stretch reads NPGLLALNTE. Positions 153-197 are domain III; it reads ELIDILTSLGYSTTEAQAALNALPADAPADTEERLRLALQYFGGV.

Belongs to the RuvA family. In terms of assembly, homotetramer. Forms an RuvA(8)-RuvB(12)-Holliday junction (HJ) complex. HJ DNA is sandwiched between 2 RuvA tetramers; dsDNA enters through RuvA and exits via RuvB. An RuvB hexamer assembles on each DNA strand where it exits the tetramer. Each RuvB hexamer is contacted by two RuvA subunits (via domain III) on 2 adjacent RuvB subunits; this complex drives branch migration. In the full resolvosome a probable DNA-RuvA(4)-RuvB(12)-RuvC(2) complex forms which resolves the HJ.

The protein resides in the cytoplasm. Functionally, the RuvA-RuvB-RuvC complex processes Holliday junction (HJ) DNA during genetic recombination and DNA repair, while the RuvA-RuvB complex plays an important role in the rescue of blocked DNA replication forks via replication fork reversal (RFR). RuvA specifically binds to HJ cruciform DNA, conferring on it an open structure. The RuvB hexamer acts as an ATP-dependent pump, pulling dsDNA into and through the RuvAB complex. HJ branch migration allows RuvC to scan DNA until it finds its consensus sequence, where it cleaves and resolves the cruciform DNA. The protein is Holliday junction branch migration complex subunit RuvA of Herpetosiphon aurantiacus (strain ATCC 23779 / DSM 785 / 114-95).